The chain runs to 215 residues: Cytochrome b6 (215 aa).

Residues 32–52 form a helical membrane-spanning segment; sequence IFYCLGGITLTCFLVQVATGF. Residue C35 coordinates heme c. 2 residues coordinate heme b: H86 and H100. A run of 3 helical transmembrane segments spans residues 90–110, 116–136, and 186–206; these read ASMMVLMMILHVFRVYLTGGF, LTWVTGVVLGVLTASFGVTGY, and LHTFVLPLLTAVFMLMHFSMI. H187 and H202 together coordinate heme b.

Belongs to the cytochrome b family. PetB subfamily. The 4 large subunits of the cytochrome b6-f complex are cytochrome b6, subunit IV (17 kDa polypeptide, PetD), cytochrome f and the Rieske protein, while the 4 small subunits are PetG, PetL, PetM and PetN. The complex functions as a dimer. Requires heme b as cofactor. It depends on heme c as a cofactor.

It localises to the plastid. The protein resides in the chloroplast thylakoid membrane. Its function is as follows. Component of the cytochrome b6-f complex, which mediates electron transfer between photosystem II (PSII) and photosystem I (PSI), cyclic electron flow around PSI, and state transitions. The chain is Cytochrome b6 from Lotus japonicus (Lotus corniculatus var. japonicus).